A 62-amino-acid chain; its full sequence is Photosystem II reaction center protein Z (62 aa).

The next 2 membrane-spanning stretches (helical) occupy residues 8–28 (AVFA…VVFA) and 41–61 (FSGT…NSLI).

The protein belongs to the PsbZ family. In terms of assembly, PSII is composed of 1 copy each of membrane proteins PsbA, PsbB, PsbC, PsbD, PsbE, PsbF, PsbH, PsbI, PsbJ, PsbK, PsbL, PsbM, PsbT, PsbY, PsbZ, Psb30/Ycf12, at least 3 peripheral proteins of the oxygen-evolving complex and a large number of cofactors. It forms dimeric complexes.

It localises to the plastid. It is found in the chloroplast thylakoid membrane. In terms of biological role, may control the interaction of photosystem II (PSII) cores with the light-harvesting antenna, regulates electron flow through the 2 photosystem reaction centers. PSII is a light-driven water plastoquinone oxidoreductase, using light energy to abstract electrons from H(2)O, generating a proton gradient subsequently used for ATP formation. The chain is Photosystem II reaction center protein Z from Jasminum nudiflorum (Winter jasmine).